Reading from the N-terminus, the 318-residue chain is HPr kinase/phosphorylase (318 aa).

Catalysis depends on residues histidine 143 and lysine 164. 158 to 165 is a binding site for ATP; the sequence is GKSGVGKS. Residue serine 165 coordinates Mg(2+). The active-site Proton acceptor; for phosphorylation activity. Proton donor; for dephosphorylation activity is aspartate 182. The important for the catalytic mechanism of both phosphorylation and dephosphorylation stretch occupies residues 206–215; the sequence is MEIRGLGILN. Glutamate 207 contributes to the Mg(2+) binding site. Arginine 248 is a catalytic residue. The tract at residues 269–274 is important for the catalytic mechanism of dephosphorylation; it reads PVKPGR.

It belongs to the HPrK/P family. In terms of assembly, homohexamer. The cofactor is Mg(2+).

It carries out the reaction [HPr protein]-L-serine + ATP = [HPr protein]-O-phospho-L-serine + ADP + H(+). The enzyme catalyses [HPr protein]-O-phospho-L-serine + phosphate + H(+) = [HPr protein]-L-serine + diphosphate. Catalyzes the ATP- as well as the pyrophosphate-dependent phosphorylation of a specific serine residue in HPr, a phosphocarrier protein of the phosphoenolpyruvate-dependent sugar phosphotransferase system (PTS). HprK/P also catalyzes the pyrophosphate-producing, inorganic phosphate-dependent dephosphorylation (phosphorolysis) of seryl-phosphorylated HPr (P-Ser-HPr). The protein is HPr kinase/phosphorylase of Leptospira borgpetersenii serovar Hardjo-bovis (strain JB197).